The primary structure comprises 205 residues: MSGKFIVIEGLEGAGKSSAIASVVTHLQAKGIQVETVREPGGTPLAESLRDLVKKKWEEKVSPTTELLLMYASRVQLVDNIIKPALSKNRWVIGDRHDLSSRAYQGGGRELGDELLQKIRKITLGNFTPDLTLLLDVEEKKGLERARERGELDRIEEEDLAFFQRTRQRYLNIAAKDPSIIVIDANQSMLDVHQSILRAIEEYLF.

10-17 (GLEGAGKS) serves as a coordination point for ATP.

Belongs to the thymidylate kinase family.

The enzyme catalyses dTMP + ATP = dTDP + ADP. Its function is as follows. Phosphorylation of dTMP to form dTDP in both de novo and salvage pathways of dTTP synthesis. The chain is Thymidylate kinase from Idiomarina loihiensis (strain ATCC BAA-735 / DSM 15497 / L2-TR).